The chain runs to 461 residues: Homocitrate synthase (461 aa).

The Pyruvate carboxyltransferase domain maps to 4-259; it reads VGILDSTLRE…IEVVKLDKLQ (256 aa). 2-oxoglutarate is bound at residue Arg-12. Glu-13 contributes to the Mg(2+) binding site. 2-oxoglutarate contacts are provided by His-76, Arg-136, and Thr-170. Mg(2+)-binding residues include His-198 and His-200. The active-site Proton acceptor is His-292.

The protein belongs to the alpha-IPM synthase/homocitrate synthase family. Homocitrate synthase LYS20/LYS21 subfamily. Mg(2+) is required as a cofactor. Mn(2+) serves as cofactor.

The catalysed reaction is acetyl-CoA + 2-oxoglutarate + H2O = (2R)-homocitrate + CoA + H(+). It participates in amino-acid biosynthesis; L-lysine biosynthesis via AAA pathway; L-alpha-aminoadipate from 2-oxoglutarate: step 1/5. Functionally, catalyzes the aldol-type condensation of 2-oxoglutarate with acetyl-CoA to yield homocitrate. Carries out the first step of the alpha-aminoadipate (AAA) lysine biosynthesis pathway. In Saccharolobus solfataricus (strain ATCC 35092 / DSM 1617 / JCM 11322 / P2) (Sulfolobus solfataricus), this protein is Homocitrate synthase.